The primary structure comprises 193 residues: Phosphoheptose isomerase (193 aa).

Residues 37–193 (LANAFKAGGK…QLIEKEMADQ (157 aa)) form the SIS domain. Residue 52–54 (NGG) coordinates substrate. Residues H61 and E65 each contribute to the Zn(2+) site. Substrate is bound by residues E65, 93 to 94 (ND), 119 to 121 (STS), S124, and Q172. Zn(2+) is bound by residues Q172 and H180.

Belongs to the SIS family. GmhA subfamily. In terms of assembly, homotetramer. Zn(2+) serves as cofactor.

It is found in the cytoplasm. It carries out the reaction 2 D-sedoheptulose 7-phosphate = D-glycero-alpha-D-manno-heptose 7-phosphate + D-glycero-beta-D-manno-heptose 7-phosphate. Its pathway is carbohydrate biosynthesis; D-glycero-D-manno-heptose 7-phosphate biosynthesis; D-glycero-alpha-D-manno-heptose 7-phosphate and D-glycero-beta-D-manno-heptose 7-phosphate from sedoheptulose 7-phosphate: step 1/1. Its function is as follows. Catalyzes the isomerization of sedoheptulose 7-phosphate in D-glycero-D-manno-heptose 7-phosphate. The sequence is that of Phosphoheptose isomerase from Pectobacterium atrosepticum (strain SCRI 1043 / ATCC BAA-672) (Erwinia carotovora subsp. atroseptica).